A 135-amino-acid polypeptide reads, in one-letter code: Serine protease inhibitor swm-1 (135 aa).

The signal sequence occupies residues 1–16 (MRILVIITCIVAVATA). 10 disulfides stabilise this stretch: cysteine 20/cysteine 53, cysteine 29/cysteine 48, cysteine 33/cysteine 44, cysteine 37/cysteine 73, cysteine 55/cysteine 67, cysteine 80/cysteine 114, cysteine 89/cysteine 109, cysteine 93/cysteine 105, cysteine 97/cysteine 133, and cysteine 116/cysteine 127. TIL domains follow at residues 20-73 (CEAN…VSEC) and 80-133 (CPEN…KKDC). Asparagine 83 carries N-linked (GlcNAc...) asparagine glycosylation.

In terms of tissue distribution, in male, expressed in the vas deferens cuboidal cells and, in posterior body wall and male-specific diagonal muscles. In hermaphrodites, expressed in posterior body wall muscles and spermatheca.

It localises to the secreted. The protein localises to the cytoplasmic vesicle. Its subcellular location is the secretory vesicle lumen. Functionally, serine protease inhibitor. Probably by inhibiting serine protease tyr-5 in males, prevents the maturation of spermatids into mature motile spermatozoa until their transfer into a hermaphrodite. Also required for efficient sperm transfer and thus for male fertility. In Caenorhabditis elegans, this protein is Serine protease inhibitor swm-1.